We begin with the raw amino-acid sequence, 184 residues long: Shikimate kinase (184 aa).

Residue 17 to 22 (SVGKTS) participates in ATP binding. Thr21 is a binding site for Mg(2+). 2 residues coordinate substrate: Asp39 and Gly85.

The protein belongs to the shikimate kinase family. Monomer. Mg(2+) serves as cofactor.

Its subcellular location is the cytoplasm. The enzyme catalyses shikimate + ATP = 3-phosphoshikimate + ADP + H(+). The protein operates within metabolic intermediate biosynthesis; chorismate biosynthesis; chorismate from D-erythrose 4-phosphate and phosphoenolpyruvate: step 5/7. Functionally, catalyzes the specific phosphorylation of the 3-hydroxyl group of shikimic acid using ATP as a cosubstrate. This chain is Shikimate kinase, found in Chlamydia muridarum (strain MoPn / Nigg).